A 1247-amino-acid polypeptide reads, in one-letter code: Lon protease homolog 2, peroxisomal (1247 aa).

The Lon N-terminal domain maps to 22–402; sequence LPTYTLDSNL…LINEMILQLI (381 aa). Disordered regions lie at residues 76-103, 447-503, and 626-655; these read SGNSNEEERSETEQKIEQSSLGQPETYH, TKNR…DVDD, and DQSDKSQPIKDNSKDSPNSSSKALTKSPTS. Low complexity predominate over residues 459–477; it reads PGPASSSGPSFSNGKSSPG. A compositionally biased stretch (basic and acidic residues) spans 626–639; it reads DQSDKSQPIKDNSK. 721–728 contributes to the ATP binding site; sequence GPPGTGKT. The region spanning 989-1230 is the Lon proteolytic domain; the sequence is TVGVGVVHGL…YDIIKIVWNE (242 aa). Catalysis depends on residues serine 1099 and lysine 1142.

Belongs to the peptidase S16 family.

Its subcellular location is the peroxisome matrix. It catalyses the reaction Hydrolysis of proteins in presence of ATP.. Its function is as follows. ATP-dependent serine protease that mediates the selective degradation of misfolded and unassembled polypeptides in the peroxisomal matrix. Necessary for type 2 peroxisome targeting signal (PTS2)-containing protein processing and facilitates peroxisome matrix protein import. This is Lon protease homolog 2, peroxisomal from Candida dubliniensis (strain CD36 / ATCC MYA-646 / CBS 7987 / NCPF 3949 / NRRL Y-17841) (Yeast).